A 420-amino-acid polypeptide reads, in one-letter code: Exodeoxyribonuclease 7 large subunit (420 aa).

This sequence belongs to the XseA family. In terms of assembly, heterooligomer composed of large and small subunits.

Its subcellular location is the cytoplasm. The catalysed reaction is Exonucleolytic cleavage in either 5'- to 3'- or 3'- to 5'-direction to yield nucleoside 5'-phosphates.. Its function is as follows. Bidirectionally degrades single-stranded DNA into large acid-insoluble oligonucleotides, which are then degraded further into small acid-soluble oligonucleotides. In Helicobacter pylori (strain G27), this protein is Exodeoxyribonuclease 7 large subunit.